Here is a 112-residue protein sequence, read N- to C-terminus: Ribonuclease P protein component (112 aa).

This sequence belongs to the RnpA family. As to quaternary structure, consists of a catalytic RNA component (M1 or rnpB) and a protein subunit.

The enzyme catalyses Endonucleolytic cleavage of RNA, removing 5'-extranucleotides from tRNA precursor.. RNaseP catalyzes the removal of the 5'-leader sequence from pre-tRNA to produce the mature 5'-terminus. It can also cleave other RNA substrates such as 4.5S RNA. The protein component plays an auxiliary but essential role in vivo by binding to the 5'-leader sequence and broadening the substrate specificity of the ribozyme. This Pelotomaculum thermopropionicum (strain DSM 13744 / JCM 10971 / SI) protein is Ribonuclease P protein component.